A 219-amino-acid polypeptide reads, in one-letter code: Ribose-5-phosphate isomerase A (219 aa).

Substrate contacts are provided by residues 28 to 31 (SGST), 81 to 84 (DGAD), and 94 to 97 (KGGG). Residue E103 is the Proton acceptor of the active site. K121 is a binding site for substrate.

The protein belongs to the ribose 5-phosphate isomerase family. As to quaternary structure, homodimer.

It carries out the reaction aldehydo-D-ribose 5-phosphate = D-ribulose 5-phosphate. Its pathway is carbohydrate degradation; pentose phosphate pathway; D-ribose 5-phosphate from D-ribulose 5-phosphate (non-oxidative stage): step 1/1. Catalyzes the reversible conversion of ribose-5-phosphate to ribulose 5-phosphate. The protein is Ribose-5-phosphate isomerase A of Actinobacillus pleuropneumoniae serotype 5b (strain L20).